Consider the following 805-residue polypeptide: MDEDGLELQQEPNSFFDATGADGTHMDGDQIVVEVQETVFVSDVVDSDITVHNFVPDDPDSVVIQDVIEDVVIEDVQCPDIMEEADVSETVIIPEQVLDSDVTEEVSLAHCTVPDDVLASDITSASMSMPEHVLTGDSIHVSDVGHVGHVGHVEHVVHDSVVEAEIVTDPLTTDVVSEEVLVADCASEAVIDANGIPVDQQDDDKGNCEDYLMISLDDAGKIEHDGSSGMTMDTESEIDPCKVDGTCPEVIKVYIFKADPGEDDLGGTVDIVESEPENDHGVELLDQNSSIRVPREKMVYMTVNDSQPEDEDLNVAEIADEVYMEVIVGEEDAAAAAAAAAVHEQQMDDNEIKTFMPIAWAAAYGNNSDGIENRNGTASALLHIDESAGLGRLAKQKPKKRRRPDSRQYQTAIIIGPDGHPLTVYPCMICGKKFKSRGFLKRHMKNHPEHLAKKKYRCTDCDYTTNKKISLHNHLESHKLTSKAEKAIECDECGKHFSHAGALFTHKMVHKEKGANKMHKCKFCEYETAEQGLLNRHLLAVHSKNFPHICVECGKGFRHPSELKKHMRIHTGEKPYQCQYCEYRSADSSNLKTHVKTKHSKEMPFKCDICLLTFSDTKEVQQHALIHQESKTHQCLHCDHKSSNSSDLKRHIISVHTKDYPHKCDMCDKGFHRPSELKKHVAAHKGKKMHQCRHCDFKIADPFVLSRHILSVHTKDLPFRCKRCRKGFRQQSELKKHMKTHSGRKVYQCEYCEYSTTDASGFKRHVISIHTKDYPHRCEYCKKGFRRPSEKNQHIMRHHKEVGLP.

The residue at position 274 (S274) is a Phosphoserine. C2H2-type zinc fingers lie at residues 425–447 (YPCMICGKKFKSRGFLKRHMKNH), 456–478 (YRCTDCDYTTNKKISLHNHLESH), 488–510 (IECDECGKHFSHAGALFTHKMVH), 519–542 (HKCKFCEYETAEQGLLNRHLLAVH), 548–570 (HICVECGKGFRHPSELKKHMRIH), 576–599 (YQCQYCEYRSADSSNLKTHVKTKH), 605–627 (FKCDICLLTFSDTKEVQQHALIH), 633–656 (HQCLHCDHKSSNSSDLKRHIISVH), 662–684 (HKCDMCDKGFHRPSELKKHVAAH), 690–713 (HQCRHCDFKIADPFVLSRHILSVH), 719–741 (FRCKRCRKGFRQQSELKKHMKTH), 747–770 (YQCEYCEYSTTDASGFKRHVISIH), and 776–798 (HRCEYCKKGFRRPSEKNQHIMRH).

It belongs to the krueppel C2H2-type zinc-finger protein family. ZFX/ZFY subfamily.

It is found in the nucleus. Functionally, probable transcriptional activator. This is Zinc finger X-chromosomal protein (ZFX) from Homo sapiens (Human).